The sequence spans 484 residues: Phosphoenolpyruvate carboxylase (484 aa).

The protein belongs to the PEPCase type 2 family. As to quaternary structure, homotetramer. Requires Mg(2+) as cofactor.

The catalysed reaction is oxaloacetate + phosphate = phosphoenolpyruvate + hydrogencarbonate. Its function is as follows. Catalyzes the irreversible beta-carboxylation of phosphoenolpyruvate (PEP) to form oxaloacetate (OAA), a four-carbon dicarboxylic acid source for the tricarboxylic acid cycle. This is Phosphoenolpyruvate carboxylase from Methanospirillum hungatei JF-1 (strain ATCC 27890 / DSM 864 / NBRC 100397 / JF-1).